The primary structure comprises 417 residues: UPF0597 protein Cphy_1256 (417 aa).

The protein belongs to the UPF0597 family.

This is UPF0597 protein Cphy_1256 from Lachnoclostridium phytofermentans (strain ATCC 700394 / DSM 18823 / ISDg) (Clostridium phytofermentans).